Here is a 462-residue protein sequence, read N- to C-terminus: Cysteine--tRNA ligase (462 aa).

Residue Cys-30 coordinates Zn(2+). The 'HIGH' region motif lies at 32 to 42 (MTVYDYCHVGH). Zn(2+) is bound by residues Cys-214, His-239, and Glu-243. The short motif at 271 to 275 (KMSKS) is the 'KMSKS' region element. Lys-274 contributes to the ATP binding site.

The protein belongs to the class-I aminoacyl-tRNA synthetase family. Monomer. Zn(2+) serves as cofactor.

The protein resides in the cytoplasm. The enzyme catalyses tRNA(Cys) + L-cysteine + ATP = L-cysteinyl-tRNA(Cys) + AMP + diphosphate. The chain is Cysteine--tRNA ligase from Cupriavidus necator (strain ATCC 17699 / DSM 428 / KCTC 22496 / NCIMB 10442 / H16 / Stanier 337) (Ralstonia eutropha).